The following is a 329-amino-acid chain: MAPSQVEDISKTELETPEHCPGPESEQAGKEDACNGCPNQSICSSQLPQGPDPDLPLINKRLSQIDHKILVLSGKGGVGKSTFTSMLSWALAADEDIEVGAMDLDICGPSLPRMLGAEGESIHQSNSGWSPVYVADNLGLMSISFMLPDADSAVIWRGAKKNGLIKQFLKDVNWGEHLDYLVVDTPPGTSDEHLSVTTYMKEVGIDGALIVTTPQEVALLDVRKEIDFCRKANIKILGLVENMSGFVCPNCKGESQIFRPTTGGGKKLCEDLKLPYLGAVPLDPRIGKACDAGESFFDSYADSPASSAILDVVDALRDQIEISLEKLNI.

A disordered region spans residues 1 to 33 (MAPSQVEDISKTELETPEHCPGPESEQAGKEDA). The segment covering 8–18 (DISKTELETPE) has biased composition (basic and acidic residues). 4 residues coordinate [4Fe-4S] cluster: C20, C34, C37, and C43. ATP is bound at residue 74–81 (GKGGVGKS). C248 and C251 together coordinate [4Fe-4S] cluster.

This sequence belongs to the Mrp/NBP35 ATP-binding proteins family. NUBP1/NBP35 subfamily. As to quaternary structure, heterotetramer of 2 NBP35 and 2 CFD1 chains. It depends on [4Fe-4S] cluster as a cofactor.

It localises to the cytoplasm. The protein localises to the nucleus. Component of the cytosolic iron-sulfur (Fe/S) protein assembly (CIA) machinery. Required for maturation of extramitochondrial Fe-S proteins. The NBP35-CFD1 heterotetramer forms a Fe-S scaffold complex, mediating the de novo assembly of an Fe-S cluster and its transfer to target apoproteins. Required for biogenesis and export of both ribosomal subunits, which may reflect a role in assembly of the Fe/S clusters in RLI1, a protein which performs rRNA processing and ribosome export. The chain is Cytosolic Fe-S cluster assembly factor NBP35 from Debaryomyces hansenii (strain ATCC 36239 / CBS 767 / BCRC 21394 / JCM 1990 / NBRC 0083 / IGC 2968) (Yeast).